The sequence spans 626 residues: E3 ubiquitin-protein ligase HRD1 (626 aa).

The signal sequence occupies residues Met1–Ala15. Residues Val16–Asn38 are Lumenal-facing. The helical transmembrane segment at Ala39–Leu59 threads the bilayer. Residues Ser60–Asp96 are Cytoplasmic-facing. A helical membrane pass occupies residues Phe97–Leu117. Residues Ala118–Ser128 are Lumenal-facing. A helical transmembrane segment spans residues Pro129 to Leu149. Over Asp150–Thr167 the chain is Cytoplasmic. The helical transmembrane segment at Val168 to Ile188 threads the bilayer. The Lumenal portion of the chain corresponds to Lys189–Val222. The helical transmembrane segment at Val223–Phe243 threads the bilayer. Residues Lys234–Arg268 form an interaction with p53/TP53 region. Topologically, residues Arg244 to Glu626 are cytoplasmic. The RING-type; atypical zinc-finger motif lies at Cys289 to Arg328. The disordered stretch occupies residues Asp569 to Gly600. Residues Ser577–Asn587 are compositionally biased toward polar residues.

The protein belongs to the HRD1 family. As to quaternary structure, homodimer. Interacts with p53. May interact with Septin2.

The protein resides in the endoplasmic reticulum membrane. It carries out the reaction S-ubiquitinyl-[E2 ubiquitin-conjugating enzyme]-L-cysteine + [acceptor protein]-L-lysine = [E2 ubiquitin-conjugating enzyme]-L-cysteine + N(6)-ubiquitinyl-[acceptor protein]-L-lysine.. It functions in the pathway protein modification; protein ubiquitination. Its function is as follows. Acts as an E3 ubiquitin-protein ligase which accepts ubiquitin specifically from endoplasmic reticulum-associated UBC7 E2 ligase and transfers it to substrates, promoting their degradation. Component of the endoplasmic reticulum quality control (ERQC) system also called ER-associated degradation (ERAD) involved in ubiquitin-dependent degradation of misfolded endoplasmic reticulum proteins. Also promotes the degradation of normal but naturally short-lived proteins. Protects cells from ER stress-induced apoptosis. Sequesters p53 in the cytoplasm and promotes its degradation, thereby negatively regulating its biological function in transcription, cell cycle regulation and apoptosis. This Drosophila melanogaster (Fruit fly) protein is E3 ubiquitin-protein ligase HRD1 (sip3).